The primary structure comprises 944 residues: 2-oxoglutarate dehydrogenase E1 component (944 aa).

The interval 915 to 944 (RRRSSPAEGDPTVHKKEQERIVSDSLTRKN) is disordered. The span at 925 to 936 (PTVHKKEQERIV) shows a compositional bias: basic and acidic residues.

The protein belongs to the alpha-ketoglutarate dehydrogenase family. As to quaternary structure, homodimer. Part of the 2-oxoglutarate dehydrogenase (OGDH) complex composed of E1 (2-oxoglutarate dehydrogenase), E2 (dihydrolipoamide succinyltransferase) and E3 (dihydrolipoamide dehydrogenase); the complex contains multiple copies of the three enzymatic components (E1, E2 and E3). It depends on thiamine diphosphate as a cofactor.

The catalysed reaction is N(6)-[(R)-lipoyl]-L-lysyl-[protein] + 2-oxoglutarate + H(+) = N(6)-[(R)-S(8)-succinyldihydrolipoyl]-L-lysyl-[protein] + CO2. E1 component of the 2-oxoglutarate dehydrogenase (OGDH) complex which catalyzes the decarboxylation of 2-oxoglutarate, the first step in the conversion of 2-oxoglutarate to succinyl-CoA and CO(2). This chain is 2-oxoglutarate dehydrogenase E1 component, found in Bacillus velezensis (strain DSM 23117 / BGSC 10A6 / LMG 26770 / FZB42) (Bacillus amyloliquefaciens subsp. plantarum).